Here is a 173-residue protein sequence, read N- to C-terminus: ATP-dependent protease subunit HslV (173 aa).

T2 is a catalytic residue. Na(+) is bound by residues G158, D161, and S164.

It belongs to the peptidase T1B family. HslV subfamily. A double ring-shaped homohexamer of HslV is capped on each side by a ring-shaped HslU homohexamer. The assembly of the HslU/HslV complex is dependent on binding of ATP.

It is found in the cytoplasm. The catalysed reaction is ATP-dependent cleavage of peptide bonds with broad specificity.. With respect to regulation, allosterically activated by HslU binding. Protease subunit of a proteasome-like degradation complex believed to be a general protein degrading machinery. The sequence is that of ATP-dependent protease subunit HslV from Glaesserella parasuis serovar 5 (strain SH0165) (Haemophilus parasuis).